The primary structure comprises 357 residues: Cinnamyl alcohol dehydrogenase 1 (357 aa).

The region spanning 20 to 348 is the Enoyl reductase (ER) domain; sequence GILSPYTYTL…KNDVRYRFVV (329 aa). C47 contacts Zn(2+). S49 lines the NADP(+) pocket. Zn(2+)-binding residues include H69, E70, C100, C103, C106, C114, and C163. Residues T167, 188 to 193, 211 to 216, T251, G275, and 298 to 300 each bind NADP(+); these read GLGGVG, SSSDKK, and SFI.

The protein belongs to the zinc-containing alcohol dehydrogenase family. Homodimer. The cofactor is Zn(2+). In terms of tissue distribution, accumulates mainly in the placenta of red fruits, and, to a lower extent, in green fruits placenta, pericarp and seeds.

It is found in the cytoplasm. The catalysed reaction is (E)-cinnamyl alcohol + NADP(+) = (E)-cinnamaldehyde + NADPH + H(+). It catalyses the reaction (E)-coniferol + NADP(+) = (E)-coniferaldehyde + NADPH + H(+). It carries out the reaction (E)-sinapyl alcohol + NADP(+) = (E)-sinapaldehyde + NADPH + H(+). The enzyme catalyses (E)-4-coumaroyl alcohol + NADP(+) = (E)-4-coumaraldehyde + NADPH + H(+). The catalysed reaction is (E)-caffeyl alcohol + NADP(+) = (E)-caffeyl aldehyde + NADPH + H(+). It catalyses the reaction vanillin + NADPH + H(+) = 4-hydroxy-3-methoxy-benzenemethanol + NADP(+). It participates in aromatic compound metabolism; phenylpropanoid biosynthesis. Inhibited, in a concentration-dependent manner, by N-(O-hydroxyphenyl) sulfinamoyltertiobutyl acetate (OHPAS), a specific cinnamyl alcohol dehydrogenase (CAD) inhibitor, as well as by ethylenediaminetetraacetic acid (EDTA), a metalloenzyme inhibitor. Functionally, involved in the biosynthesis of capsinoids natural products (e.g. capsiate), non-pungent alkaloids synthesized from phenylpropanoid intermediates in the placental tissue of sweet chili pepper fruit acting as repellant on herbivorous mammals. Catalyzes the reduction of vanillin to generate vanillyl alcohol, a precursor of capsiate, a non-pungent component that accumulates mainly in the placenta of mature red fruits, but also in green fruits to lower levels. Involved in lignin biosynthesis. Catalyzes the final step specific for the production of lignin monomers. Mediates the conversion of cinnamaldehyde and coniferaldehyde to cinnamyl alcohol and coniferyl alcohol, respectively. Catalyzes the NADPH-dependent reduction of 5-hydroxyconiferaldehyde, sinapaldehyde, 4-coumaraldehyde and caffeyl aldehyde to their respective alcohols. In Capsicum annuum (Capsicum pepper), this protein is Cinnamyl alcohol dehydrogenase 1.